A 750-amino-acid polypeptide reads, in one-letter code: MIIRSPEPEVKILVDRDPIKTSFEEWAKPGHFSRTIAKGPDTTTWIWNLHADAHDFDSHTNDLEEISRKVFSAHFGQLSIIFLWLSGMYFHGARFSNYEAWLSDPTHIGPSAQVVWPIVGQEILNGDVGGGFRGIQITSGFFQIWRASGITSELQLYCTAIGALVFAALMLFAGWFHYHKAAPKLAWFQDVESMLNHHLAGLLGLGSLSWAGHQVHVSLPINQFLNAGVDPKEIPLPHEFILNRDLLAQLYPSFAEGATPFFTLNWSKYAEFLTFRGGLDPVTGGLWLTDIAHHHLAIAILFLIAGHMYRTNWGIGHGIKDILEAHKGPFTGQGHKGLYEILTTSWHAQLSLNLAMLGSLTIVVAHHMYSMPPYPYLATDYGTQLSLFTHHMWIGGFLIVGAAAHAAIFMVRDYDPTTRYNDLLDRVLRHRDAIISHLNWVCIFLGFHSFGLYIHNDTMSALGRPQDMFSDTAIQLQPVFAQWIQNTHALAPAATAPGATASTSLTWGGGDLVAVGGKVALLPIPLGTADFLVHHIHAFTIHVTVLILLKGVLFARSSRLIPDKANLGFRFPCDGPGRGGTCQVSAWDHVFLGLFWMYNAISVVIFHFSWKMQSDVWGSISDQGVVTHITGGNFAQSSITINGWLRDFLWAQASQVIQSYGSSLSAYGLFFLGAHFVWAFSLMFLFSGRGYWQELIESIVWAHNKLKVAPATQPRALSIVQGRAVGVTHYLLGGIATTWAFFLARIIAVG.

The next 8 membrane-spanning stretches (helical) occupy residues 70 to 93 (VFSA…FHGA), 156 to 179 (LYCT…FHYH), 195 to 219 (LNHH…HVSL), 291 to 309 (IAHH…GHMY), 346 to 369 (WHAQ…HHMY), 385 to 411 (LSLF…IFMV), 433 to 455 (AIIS…LYIH), and 531 to 549 (FLVH…LILL). Residues cysteine 573 and cysteine 582 each contribute to the [4Fe-4S] cluster site. 2 helical membrane-spanning segments follow: residues 589 to 610 (HVFL…HFSW) and 664 to 686 (LSAY…MFLF). Chlorophyll a' is bound at residue histidine 675. Chlorophyll a contacts are provided by methionine 683 and tyrosine 691. A phylloquinone-binding site is contributed by tryptophan 692. A helical transmembrane segment spans residues 724 to 744 (AVGVTHYLLGGIATTWAFFLA).

It belongs to the PsaA/PsaB family. In terms of assembly, the PsaA/B heterodimer binds the P700 chlorophyll special pair and subsequent electron acceptors. PSI consists of a core antenna complex that captures photons, and an electron transfer chain that converts photonic excitation into a charge separation. The eukaryotic PSI reaction center is composed of at least 11 subunits. P700 is a chlorophyll a/chlorophyll a' dimer, A0 is one or more chlorophyll a, A1 is one or both phylloquinones and FX is a shared 4Fe-4S iron-sulfur center. serves as cofactor.

It is found in the plastid. The protein localises to the chloroplast thylakoid membrane. It catalyses the reaction reduced [plastocyanin] + hnu + oxidized [2Fe-2S]-[ferredoxin] = oxidized [plastocyanin] + reduced [2Fe-2S]-[ferredoxin]. Its function is as follows. PsaA and PsaB bind P700, the primary electron donor of photosystem I (PSI), as well as the electron acceptors A0, A1 and FX. PSI is a plastocyanin-ferredoxin oxidoreductase, converting photonic excitation into a charge separation, which transfers an electron from the donor P700 chlorophyll pair to the spectroscopically characterized acceptors A0, A1, FX, FA and FB in turn. Oxidized P700 is reduced on the lumenal side of the thylakoid membrane by plastocyanin. The sequence is that of Photosystem I P700 chlorophyll a apoprotein A1 from Eucalyptus globulus subsp. globulus (Tasmanian blue gum).